The sequence spans 36 residues: Phospholipase A2 hemilipin-2 (36 aa).

Belongs to the phospholipase A2 family. Group III subfamily. In terms of assembly, heterodimer composed of a small subunit and a large subunit; disulfid-linked. It depends on Ca(2+) as a cofactor. In terms of tissue distribution, expressed by the venom gland.

Its subcellular location is the secreted. The enzyme catalyses a 1,2-diacyl-sn-glycero-3-phosphocholine + H2O = a 1-acyl-sn-glycero-3-phosphocholine + a fatty acid + H(+). Functionally, scorpion venom phospholipase A2 (PLA2) that impacts angiogenesis in vitro and in vivo without showing any cytotoxic or apoptotic signs. The antiangiogenic effect is independent from the catalytic activity and seems to be held by its small subunit. PLA2 catalyzes the calcium-dependent hydrolysis of the 2-acyl groups in 3-sn-phosphoglycerides. This Hemiscorpius lepturus (Scorpion) protein is Phospholipase A2 hemilipin-2.